Consider the following 695-residue polypeptide: Nucleoprotein (695 aa).

Coiled-coil stretches lie at residues 316 to 341 (VNVG…RRHE) and 372 to 399 (QTLA…VEDQ). Disordered stretches follow at residues 423-458 (VQAR…SFVD), 483-515 (TSRE…TNPI), and 527-612 (PVQE…DTRA). 2 stretches are compositionally biased toward polar residues: residues 495 to 505 (RQSQDLNNSQG) and 537 to 552 (TTDS…SDNE). Positions 603 to 606 (PSAP) match the PTAP/PSAP motif motif.

Belongs to the filoviruses nucleoprotein family. In terms of assembly, homooligomer. Homomultimerizes to form the nucleocapsid. Binds to viral genomic RNA. Interacts with VP35 and VP30 to form the nucleocapsid. Also interacts with VP24 and VP40. Phosphorylated.

It is found in the virion. It localises to the host cytoplasm. In terms of biological role, encapsidates the genome, protecting it from nucleases. The encapsidated genomic RNA is termed the nucleocapsid and serves as template for transcription and replication. During replication, encapsidation by NP is coupled to RNA synthesis and all replicative products are resistant to nucleases. The protein is Nucleoprotein (NP) of Chlorocebus aethiops (Green monkey).